Consider the following 531-residue polypeptide: Galactose/methyl galactoside import permease protein MglC (531 aa).

Helical transmembrane passes span F193–V213, M239–G259, V267–P287, V300–F320, I326–G346, L376–I396, F424–F444, L461–L481, G483–I503, and T505–V525.

Belongs to the binding-protein-dependent transport system permease family. AraH/RbsC subfamily. The complex is composed of one ATP-binding protein (MglA), two transmembrane proteins (MglC) and a solute-binding protein (MglB).

It localises to the cell membrane. Part of the ABC transporter complex MglABC involved in galactose/methyl galactoside import. Probably responsible for the translocation of the substrate across the membrane. The polypeptide is Galactose/methyl galactoside import permease protein MglC (mglC) (Treponema pallidum (strain Nichols)).